We begin with the raw amino-acid sequence, 208 residues long: Nitrate/nitrite response regulator protein homolog (208 aa).

A Response regulatory domain is found at 6–122 (KVLLIDDHPL…TLLEQIKRIA (117 aa)). A 4-aspartylphosphate modification is found at D57. The HTH luxR-type domain occupies 142–207 (EDNPLDSLTD…AATVLFFEQN (66 aa)). Residues 166 to 185 (NKQIAAQLFISEETVKVHIR) constitute a DNA-binding region (H-T-H motif).

Could activate the expression of a formate dehydrogenase operon and could repress the transcription of the fumarate reductase (frdABCD) operon. This Haemophilus influenzae (strain ATCC 51907 / DSM 11121 / KW20 / Rd) protein is Nitrate/nitrite response regulator protein homolog (narP).